The following is a 33-amino-acid chain: Neutrophil defensin 3 (33 aa).

3 disulfide bridges follow: Cys-3/Cys-31, Cys-5/Cys-20, and Cys-10/Cys-30.

Belongs to the alpha-defensin family.

It localises to the secreted. Functionally, anti-fungal and bactericidal activity, greater against Gram-positive bacteria. The polypeptide is Neutrophil defensin 3 (Mesocricetus auratus (Golden hamster)).